The sequence spans 284 residues: Pantothenate synthetase (284 aa).

Residue 30 to 37 participates in ATP binding; it reads MGNLHDGH. H37 functions as the Proton donor in the catalytic mechanism. (R)-pantoate is bound at residue Q61. Q61 is a binding site for beta-alanine. 149-152 is an ATP binding site; it reads GEKD. Q155 lines the (R)-pantoate pocket. ATP-binding positions include V178 and 186-189; that span reads LSSR.

It belongs to the pantothenate synthetase family. As to quaternary structure, homodimer.

Its subcellular location is the cytoplasm. The enzyme catalyses (R)-pantoate + beta-alanine + ATP = (R)-pantothenate + AMP + diphosphate + H(+). Its pathway is cofactor biosynthesis; (R)-pantothenate biosynthesis; (R)-pantothenate from (R)-pantoate and beta-alanine: step 1/1. Catalyzes the condensation of pantoate with beta-alanine in an ATP-dependent reaction via a pantoyl-adenylate intermediate. The sequence is that of Pantothenate synthetase from Enterobacter sp. (strain 638).